The following is a 594-amino-acid chain: MVLRSHPFPRQDRPQGSVPRAVPGSPVGPSTSTHSEDRHGPSSSVGTVIGTGTGGLVEAGGQPQPRSSETNGSPSPDPPPGLRGEGTREKSLDPLPQAAMPRGPAQPPAQRPPGPAASSSARRSQPVPQLRKRSRCEIAPSSEQEVRPAASGDPQGEAPGEGGSPAGRSGALTEKQEEARKLMVFLQRPGGWGVVEGPRKPSSRALEPATAAALRRRLDLGSCLDVLAFAQQHGEPGLAQETYALMSDNLLRVLGDPCLYRRLSAADRERILSLRTGRGRAVLGVLVLPSLYQGGRSGLPRGPRGEEPPAAAPVSLPLPAHLHVFNPRENTWRPLTQVPEEAPLRGCGLCTMHNYLFLAGGIRGSGAKAVCSNEVFCYNPLTNIWSQVRPMQQARAQLKLVALDGLLYAIGGECLYSMECYDPRTDAWTPRAPLPAGTFPVAHEAVACRGDIYVTGGHLFYRLLRYSPVKDAWDECPYSASHRRSSDIVALGGFLYRFDLLRGVGAAVMRYNTVTGSWSRAASLPLPAPAPLHCTTLGNTIYCLNPQVTATFTVSGGTAQFQAKELQPFPLGSTGVLSPFILTLPPEDRLQTSL.

Residues M1–E174 form a disordered region. A compositionally biased stretch (gly residues) spans I49 to E58. Positions Q64 to P74 are enriched in polar residues. Pro residues predominate over residues P104–P115. A compositionally biased stretch (low complexity) spans A116 to P126. Kelch repeat units lie at residues E306–N354, Y355–G405, L406–C448, D451–G493, and L495–G538.

This chain is Kelch domain-containing protein 7B (KLHDC7B), found in Homo sapiens (Human).